A 96-amino-acid polypeptide reads, in one-letter code: Small ribosomal subunit protein bS20 (96 aa).

This sequence belongs to the bacterial ribosomal protein bS20 family.

Its function is as follows. Binds directly to 16S ribosomal RNA. The protein is Small ribosomal subunit protein bS20 of Thermotoga petrophila (strain ATCC BAA-488 / DSM 13995 / JCM 10881 / RKU-1).